Reading from the N-terminus, the 363-residue chain is Peptide chain release factor 1 (363 aa).

Residue glutamine 237 is modified to N5-methylglutamine.

This sequence belongs to the prokaryotic/mitochondrial release factor family. In terms of processing, methylated by PrmC. Methylation increases the termination efficiency of RF1.

The protein localises to the cytoplasm. Peptide chain release factor 1 directs the termination of translation in response to the peptide chain termination codons UAG and UAA. The chain is Peptide chain release factor 1 from Mesoplasma florum (strain ATCC 33453 / NBRC 100688 / NCTC 11704 / L1) (Acholeplasma florum).